The following is a 101-amino-acid chain: Small ribosomal subunit protein uS10 (101 aa).

It belongs to the universal ribosomal protein uS10 family. As to quaternary structure, part of the 30S ribosomal subunit.

Its function is as follows. Involved in the binding of tRNA to the ribosomes. The protein is Small ribosomal subunit protein uS10 of Mycobacterium leprae (strain Br4923).